We begin with the raw amino-acid sequence, 817 residues long: General transcription factor 3C polypeptide 4 (817 aa).

Met-1 bears the N-acetylmethionine mark. Residues 1 to 40 (MSEADQALVGPKADEPSPPAEEKDEGGGKEAAADAAPGPS) form a disordered region. Residue Lys-221 forms a Glycyl lysine isopeptide (Lys-Gly) (interchain with G-Cter in SUMO2) linkage. Phosphoserine occurs at positions 600 and 607. The tract at residues 603-658 (LLVDSPGMGDGEDEQQEEGTSKQGTKAGLQEKSKEGDTEETPEDSLTAGGDTGGRE) is disordered. Lys-624 participates in a covalent cross-link: Glycyl lysine isopeptide (Lys-Gly) (interchain with G-Cter in SUMO2). Ser-647 is subject to Phosphoserine.

Belongs to the TFIIIC subunit 4 family. As to quaternary structure, part of the TFIIIC subcomplex TFIIIC2, consisting of six subunits, GTF3C1, GTF3C2, GTF3C3, GTF3C4, GTF3C5 and GTF3C6. Interacts with BRF1, GTF3C1, GTF3C2, GTF3C5, GTF3C6, POLR3C and POLR3F.

The protein resides in the nucleus. It catalyses the reaction L-lysyl-[protein] + acetyl-CoA = N(6)-acetyl-L-lysyl-[protein] + CoA + H(+). Functionally, essential for RNA polymerase III to make a number of small nuclear and cytoplasmic RNAs, including 5S RNA, tRNA, and adenovirus-associated (VA) RNA of both cellular and viral origin. Has histone acetyltransferase activity (HAT) with unique specificity for free and nucleosomal H3. May cooperate with GTF3C5 in facilitating the recruitment of TFIIIB and RNA polymerase through direct interactions with BRF1, POLR3C and POLR3F. May be localized close to the A box. The polypeptide is General transcription factor 3C polypeptide 4 (Gtf3c4) (Mus musculus (Mouse)).